The sequence spans 827 residues: Carnosine synthase 1 (827 aa).

Residues 516-720 (GPPWPSTSLH…LLLASTMVAC (205 aa)) form the ATP-grasp domain. An ATP-binding site is contributed by 542 to 611 (IYQVPLPGVM…MEFVEGTEHD (70 aa)). Residues Glu-677, Glu-689, and Asn-691 each contribute to the Mg(2+) site. Residues Glu-677, Glu-689, and Asn-691 each coordinate Mn(2+).

Homotetramer. Mg(2+) is required as a cofactor. Requires Mn(2+) as cofactor.

The catalysed reaction is beta-alanine + L-histidine + ATP = carnosine + ADP + phosphate + H(+). It carries out the reaction 4-aminobutanoate + L-histidine + ATP = L-homocarnosine + ADP + phosphate + H(+). Functionally, catalyzes the synthesis of carnosine and homocarnosine. Carnosine is synthesized more efficiently than homocarnosine. The sequence is that of Carnosine synthase 1 from Mus musculus (Mouse).